We begin with the raw amino-acid sequence, 192 residues long: RNA-free ribonuclease P (192 aa).

It belongs to the HARP family.

The enzyme catalyses Endonucleolytic cleavage of RNA, removing 5'-extranucleotides from tRNA precursor.. RNA-free RNase P that catalyzes the removal of the 5'-leader sequence from pre-tRNA to produce the mature 5'-terminus. This chain is RNA-free ribonuclease P, found in Alkalilimnicola ehrlichii (strain ATCC BAA-1101 / DSM 17681 / MLHE-1).